The chain runs to 469 residues: MRFKQPSRRDRPVMFKRSKNVSVDVGVDSISDLPDAVLQHIFSYIPTELAIRTSVLSKRWRHVWSETPHLSFEWLKVSPKLINKTLASYTASKIKSFHLCTRYSYEADTHHVNSSIEFAMSHNVDDLSLAFRRCSPFYNFDDCFYTNSSLKRVELRYVDLMPRCMVSWTSLKNLSLTDCTMSDESFLEILSGCPILESLSLKFCMSLKYLNLSKSLRLTRLEIERISYIRAPMLSMQIVAPYIHYLRLRDSEAHCTFVDVSSLTEANVDVSTFHPRTCYHDFDPLDPHDLLVMVQTMLKTFQKVEKLTLGVNLLQMLSLSKIPSLPLPMLKVKTLTLETMIIRSVVPGIARLLQNLPGLKKITVYTTNPCNTEVEPCVNSYLDAQDLNPDQWWRLDDVVFPISSEYEVLKPEIMASFMELLLANTRTLETLVVELGSCVARSRFKELFQIALTLSHDKKVSIMLKRSNG.

The 51-residue stretch at 27-77 folds into the F-box domain; that stretch reads VDSISDLPDAVLQHIFSYIPTELAIRTSVLSKRWRHVWSETPHLSFEWLKV. 6 LRR repeats span residues 30 to 58, 178 to 203, 204 to 214, 223 to 250, 296 to 321, and 341 to 366; these read ISDL…VLSK, DCTM…SLKF, CMSLKYLNLSK, IERI…RLRD, TMLK…SLSK, and IIRS…TVYT.

In Arabidopsis thaliana (Mouse-ear cress), this protein is Putative F-box/LRR-repeat protein At5g02930.